Reading from the N-terminus, the 176-residue chain is MLRFLNQCSHGRGAWLLMAFTALALELTALWFQHVMLLKPCVLCIYERCALFGVLGAALIGAIAPKTPLRYVAMVIWLYSAFRGVQLTYEHTMLQLYPSPFATCDFMARFPEWLPLDKWVPQVFVASGDCAERQWEFLGLEMPQWLLGIFIAYLIVAVLVVISQPFKAKKRDLFGR.

The Cytoplasmic segment spans residues 1–14 (MLRFLNQCSHGRGA). A helical transmembrane segment spans residues 15 to 31 (WLLMAFTALALELTALW). The Periplasmic portion of the chain corresponds to 32–49 (FQHVMLLKPCVLCIYERC). Residues cysteine 41 and cysteine 44 are joined by a disulfide bond. Residues 50-65 (ALFGVLGAALIGAIAP) traverse the membrane as a helical segment. Over 66-71 (KTPLRY) the chain is Cytoplasmic. A helical membrane pass occupies residues 72-89 (VAMVIWLYSAFRGVQLTY). Residues 90–144 (EHTMLQLYPSPFATCDFMARFPEWLPLDKWVPQVFVASGDCAERQWEFLGLEMPQ) lie on the Periplasmic side of the membrane. A disulfide bridge connects residues cysteine 104 and cysteine 130. A helical membrane pass occupies residues 145 to 163 (WLLGIFIAYLIVAVLVVIS). Residues 164 to 176 (QPFKAKKRDLFGR) are Cytoplasmic-facing.

Belongs to the DsbB family.

It localises to the cell inner membrane. Functionally, required for disulfide bond formation in some periplasmic proteins. Acts by oxidizing the DsbA protein. The sequence is that of Disulfide bond formation protein B from Escherichia coli O6:K15:H31 (strain 536 / UPEC).